A 495-amino-acid polypeptide reads, in one-letter code: Lysine--tRNA ligase (495 aa).

The Mg(2+) site is built by Glu-406 and Glu-413.

It belongs to the class-II aminoacyl-tRNA synthetase family. Homodimer. The cofactor is Mg(2+).

It localises to the cytoplasm. It carries out the reaction tRNA(Lys) + L-lysine + ATP = L-lysyl-tRNA(Lys) + AMP + diphosphate. This is Lysine--tRNA ligase from Leptospira interrogans serogroup Icterohaemorrhagiae serovar Lai (strain 56601).